We begin with the raw amino-acid sequence, 181 residues long: Histone deacetylase complex subunit SAP30L-B (181 aa).

2 cysteine pairs are disulfide-bonded: C26–C27 and C35–C71. An Atypical zinc finger spans residues 26–74 (CCLIDGGERCPRPAGNASFSKRVQKSISQKKLKLDIDKSVRHLYICDFH). The tract at residues 82 to 103 (RNKRKRKTSDDGGDSPEHETDV) is disordered. The short motif at 83–88 (NKRKRK) is the Nuclear localization signal (NLS) element. The interval 85–87 (RKR) is important for DNA and phosphoinositide binding.

It belongs to the SAP30 family. Interacts with components of the histone deacetylase complex sin3a, hdac1 and hdac2. Binds histones and nucleosomes.

It is found in the nucleus. It localises to the nucleolus. In terms of biological role, functions as a transcription repressor, probably via its interaction with histone deacetylase complexes. Involved in the functional recruitment of the class 1 Sin3-histone deacetylase complex (HDAC) to the nucleolus. Binds DNA, apparently without sequence-specificity, and bends bound double-stranded DNA. Binds phosphoinositol phosphates (phosphoinositol 3-phosphate, phosphoinositol 4-phosphate and phosphoinositol 5-phosphate) via the same basic sequence motif that mediates DNA binding and nuclear import. This Xenopus laevis (African clawed frog) protein is Histone deacetylase complex subunit SAP30L-B (sap30l-b).